The chain runs to 168 residues: Plastocyanin A, chloroplastic (168 aa).

The N-terminal 69 residues, 1–69 (MATVTSAAVS…SAMIASNAMA (69 aa)), are a transit peptide targeting the chloroplast. One can recognise a Plastocyanin-like domain in the interval 70–168 (IDVLLGADDG…AGMVGKVTVN (99 aa)). H106, C153, H156, and M161 together coordinate Cu cation.

It belongs to the plastocyanin family. It depends on Cu(2+) as a cofactor.

The protein localises to the plastid. Its subcellular location is the chloroplast thylakoid membrane. Its function is as follows. Participates in electron transfer between P700 and the cytochrome b6-f complex in photosystem I. The protein is Plastocyanin A, chloroplastic (PETE) of Populus nigra (Lombardy poplar).